The following is a 128-amino-acid chain: Glycine cleavage system H protein (128 aa).

One can recognise a Lipoyl-binding domain in the interval 22–104; it reads TVLVGITDYA…YGEGWIFRLK (83 aa). Lys63 is modified (N6-lipoyllysine).

It belongs to the GcvH family. In terms of assembly, the glycine cleavage system is composed of four proteins: P, T, L and H. Monomer. (R)-lipoate serves as cofactor.

Functionally, the glycine cleavage system catalyzes the degradation of glycine. The H protein shuttles the methylamine group of glycine from the P protein to the T protein. The sequence is that of Glycine cleavage system H protein from Thermus thermophilus (strain ATCC 27634 / DSM 579 / HB8).